We begin with the raw amino-acid sequence, 197 residues long: uncharacterized protein (197 aa).

This is an uncharacterized protein from Methanothermobacter thermautotrophicus (Methanobacterium thermoformicicum).